Reading from the N-terminus, the 410-residue chain is Peptidase T (410 aa).

His78 contacts Zn(2+). The active site involves Asp80. A Zn(2+)-binding site is contributed by Asp140. Residue Glu174 is the Proton acceptor of the active site. 3 residues coordinate Zn(2+): Glu175, Asp197, and His379.

The protein belongs to the peptidase M20B family. It depends on Zn(2+) as a cofactor.

The protein resides in the cytoplasm. The catalysed reaction is Release of the N-terminal residue from a tripeptide.. Functionally, cleaves the N-terminal amino acid of tripeptides. The protein is Peptidase T of Vibrio atlanticus (strain LGP32) (Vibrio splendidus (strain Mel32)).